Consider the following 313-residue polypeptide: Glutathione S-transferase omega-like 2 (313 aa).

Cys49 functions as the Nucleophile in the catalytic mechanism. A GST C-terminal domain is found at 161–289; the sequence is PSSLRTKIDE…TDFKHIKCHY (129 aa).

The protein belongs to the GST superfamily. Omega family.

The protein resides in the cytoplasm. The protein localises to the nucleus. It localises to the golgi apparatus. It carries out the reaction RX + glutathione = an S-substituted glutathione + a halide anion + H(+). The catalysed reaction is L-dehydroascorbate + 2 glutathione = glutathione disulfide + L-ascorbate. Its function is as follows. Active as '1-Cys' thiol transferase against beta-hydroxyethyl disulfide (HED), as dehydroascorbate reductase and as dimethylarsinic acid reductase, while not active against the standard GST substrate 1-chloro-2,4-dinitrobenzene (CDNB). May be involved in cell wall organization and biogenesis. This Schizosaccharomyces pombe (strain 972 / ATCC 24843) (Fission yeast) protein is Glutathione S-transferase omega-like 2 (gto2).